The primary structure comprises 537 residues: Phosphoenolpyruvate carboxykinase (ATP) (537 aa).

Positions 61, 195, and 201 each coordinate substrate. Residues lysine 201, histidine 220, and 236-244 contribute to the ATP site; that span reads GLSGTGKTT. Mn(2+) contacts are provided by lysine 201 and histidine 220. Aspartate 257 contributes to the Mn(2+) binding site. Glutamate 285 lines the ATP pocket. The span at 312–321 shows a compositional bias: basic and acidic residues; that stretch reads DFNDGSKTEN. The tract at residues 312 to 339 is disordered; that stretch reads DFNDGSKTENTRSAYPLESIPNASPTGR. Arginine 323 provides a ligand contact to substrate. ATP contacts are provided by arginine 323 and threonine 448.

The protein belongs to the phosphoenolpyruvate carboxykinase (ATP) family. Requires Mn(2+) as cofactor.

It localises to the cytoplasm. It catalyses the reaction oxaloacetate + ATP = phosphoenolpyruvate + ADP + CO2. It functions in the pathway carbohydrate biosynthesis; gluconeogenesis. Its function is as follows. Involved in the gluconeogenesis. Catalyzes the conversion of oxaloacetate (OAA) to phosphoenolpyruvate (PEP) through direct phosphoryl transfer between the nucleoside triphosphate and OAA. The polypeptide is Phosphoenolpyruvate carboxykinase (ATP) (Rhodopseudomonas palustris (strain BisB18)).